The chain runs to 567 residues: DNA ligase B (567 aa).

Lys126 functions as the N6-AMP-lysine intermediate in the catalytic mechanism.

The protein belongs to the NAD-dependent DNA ligase family. LigB subfamily.

The catalysed reaction is NAD(+) + (deoxyribonucleotide)n-3'-hydroxyl + 5'-phospho-(deoxyribonucleotide)m = (deoxyribonucleotide)n+m + AMP + beta-nicotinamide D-nucleotide.. Catalyzes the formation of phosphodiester linkages between 5'-phosphoryl and 3'-hydroxyl groups in double-stranded DNA using NAD as a coenzyme and as the energy source for the reaction. The sequence is that of DNA ligase B from Pseudomonas putida (strain W619).